The sequence spans 507 residues: Myocyte-specific enhancer factor 2A (507 aa).

Residues 3-57 form the MADS-box domain; that stretch reads RKKIQITRIMDERNRQVTFTKRKFGLMKKAYELSVLCDCEIALIIFNSSNKLFQY. The mef2-type DNA-binding region spans 58–86; the sequence is ASTDMDKVLLKYTEYNEPHESGTNSDIVE. S59 carries the post-translational modification Phosphoserine; by CK2. S98 and S235 each carry phosphoserine. The segment at 175-269 is disordered; it reads ADSSMLSPPQ…GGGNLGMNSR (95 aa). The segment covering 209-245 has biased composition (polar residues); that stretch reads LSTSDLTVPNGAGSSPVGNGFVNSRASPNLVGTTGAN. K249 carries the N6-acetyllysine modification. A Phosphoserine modification is found at S255. Residues 266-283 are required for interaction with MAPKs; sequence MNSRKPDLRVVIPPSSKG. Positions 289–296 are beta domain; sequence SEEEELEL. T312 and T319 each carry phosphothreonine; by MAPK7 and MAPK14. S355 carries the post-translational modification Phosphoserine; by MAPK7. A compositionally biased stretch (polar residues) spans 390-402; that stretch reads SNLSINTNQNINI. The interval 390 to 507 is disordered; it reads SNLSINTNQN…KRMRMDAWVT (118 aa). K403 bears the N6-acetyllysine; alternate mark. Residue K403 forms a Glycyl lysine isopeptide (Lys-Gly) (interchain with G-Cter in SUMO); alternate linkage. S408 bears the Phosphoserine; by CDK5 mark. T415 is subject to Phosphothreonine. The span at 423 to 443 shows a compositional bias: pro residues; sequence QPPPPSQAPQPQPPQPQPQPQ. S453 bears the Phosphoserine mark. The span at 453–466 shows a compositional bias: low complexity; sequence SPVDSLSSSSSSYD. Composition is skewed to basic and acidic residues over residues 467–477 and 488–507; these read GSDREDPRGDF and NTED…AWVT.

This sequence belongs to the MEF2 family. In terms of assembly, binds DNA as a homo- or heterodimer. Dimerizes with MEF2D. Interacts with HDAC7. Interacts with PIAS1; the interaction enhances sumoylation. Interacts with HDAC4, HDAC9 and SLC2A4RG. Interacts (via the N-terminal) with MAPK7; the interaction results in the phosphorylation and transcriptional activity of MEF2A. Post-translationally, constitutive phosphorylation on Ser-408 promotes Lys-403 sumoylation thus preventing acetylation at this site. Dephosphorylation on Ser-408 by PPP3CA upon neuron depolarization promotes a switch from sumoylation to acetylation on residue Lys-403 leading to inhibition of dendrite claw differentiation. Phosphorylation on Thr-312 and Thr-319 are the main sites involved in p38 MAPK signaling and activate transcription. Phosphorylated on these sites by MAPK14/p38alpha and MAPK11/p38beta, but not by MAPK13/p38delta nor by MAPK12/p38gamma. Phosphorylation on Ser-408 by CDK5 induced by neurotoxicity inhibits MEF2A transcriptional activation leading to apoptosis of cortical neurons. Phosphorylation on Thr-312, Thr-319 and Ser-355 can be induced by EGF. In terms of processing, sumoylation on Lys-403 is enhanced by PIAS1 and represses transcriptional activity. Phosphorylation on Ser-408 is required for sumoylation. Has no effect on nuclear location nor on DNA binding. Sumoylated with SUMO1 and, to a lesser extent with SUMO2 and SUMO3. PIASx facilitates sumoylation in postsynaptic dendrites in the cerebellar cortex and promotes their morphogenesis. Acetylation on Lys-403 activates transcriptional activity. Acetylated by p300 on several sites in diffentiating myocytes. Acetylation on Lys-4 increases DNA binding and transactivation. Hyperacetylation by p300 leads to enhanced cardiac myocyte growth and heart failure. Post-translationally, proteolytically cleaved on several sites by caspase 3 and caspase 7 following neurotoxicity. Preferentially cleaves the CDK5-mediated hyperphosphorylated form which leads to cortical neuron apoptosis and transcriptional inactivation.

The protein localises to the nucleus. Its function is as follows. Transcriptional activator which binds specifically to the MEF2 element, 5'-YTA[AT](4)TAR-3', found in numerous muscle-specific genes. Also involved in the activation of numerous growth factor- and stress-induced genes. Mediates cellular functions not only in skeletal and cardiac muscle development, but also in neuronal differentiation and survival. Plays diverse roles in the control of cell growth, survival and apoptosis via p38 MAPK signaling in muscle-specific and/or growth factor-related transcription. In cerebellar granule neurons, phosphorylated and sumoylated MEF2A represses transcription of NUR77 promoting synaptic differentiation. Associates with chromatin to the ZNF16 promoter. This is Myocyte-specific enhancer factor 2A (MEF2A) from Sus scrofa (Pig).